Reading from the N-terminus, the 188-residue chain is Phosphatidylinositol N-acetylglucosaminyltransferase subunit H (188 aa).

It belongs to the PIGH family. In terms of assembly, component of the glycosylphosphatidylinositol-N-acetylglucosaminyltransferase (GPI-GnT) complex composed at least by PIGA, PIGC, PIGH, PIGP, PIGQ, PIGY and DPM2. Interacts with PIGQ.

It localises to the cytoplasm. Its pathway is glycolipid biosynthesis; glycosylphosphatidylinositol-anchor biosynthesis. Functionally, part of the glycosylphosphatidylinositol-N-acetylglucosaminyltransferase (GPI-GnT) complex that catalyzes the transfer of N-acetylglucosamine from UDP-N-acetylglucosamine to phosphatidylinositol and participates in the first step of GPI biosynthesis. In Bos taurus (Bovine), this protein is Phosphatidylinositol N-acetylglucosaminyltransferase subunit H.